Here is a 201-residue protein sequence, read N- to C-terminus: MVRRFCNGAVALGIALTACAAFPRAIMAIDLSRFYGHINTKRSDACHPYEPFKCPGDGLCISIQYLCDGAPDCQDGYDEDSRLCTAAKRPPVEETATFLQSLLASHGPNYLEKLFGNKARDTLKPLGGVEKVAIALSESQTIEDFGAALHLMRSDLEHLRSVFMAVENGDLGMLKSIGIKDSELGDVKFFLEKLVKTGFLD.

Residues 1 to 28 (MVRRFCNGAVALGIALTACAAFPRAIMA) form the signal peptide. The propeptide occupies 43 to 201 (SDACHPYEPF…EKLVKTGFLD (159 aa)). The LDL-receptor class A domain maps to 45 to 85 (ACHPYEPFKCPGDGLCISIQYLCDGAPDCQDGYDEDSRLCT). Disulfide bonds link cysteine 46–cysteine 60, cysteine 54–cysteine 73, and cysteine 67–cysteine 84.

In terms of tissue distribution, expressed in central brain, antennal and optical lobes, in gnathal, thoracic and abdominal ganglia and in the retrocerebral complex (at protein level).

The protein resides in the secreted. This Camponotus floridanus (Florida carpenter ant) protein is IDLSRF-like peptide.